The primary structure comprises 711 residues: Ribosomal RNA large subunit methyltransferase K/L (711 aa).

The THUMP domain maps to 43-154 (LGYRITLWSR…RGQITIGLNF (112 aa)).

It belongs to the methyltransferase superfamily. RlmKL family.

It localises to the cytoplasm. It catalyses the reaction guanosine(2445) in 23S rRNA + S-adenosyl-L-methionine = N(2)-methylguanosine(2445) in 23S rRNA + S-adenosyl-L-homocysteine + H(+). It carries out the reaction guanosine(2069) in 23S rRNA + S-adenosyl-L-methionine = N(2)-methylguanosine(2069) in 23S rRNA + S-adenosyl-L-homocysteine + H(+). Functionally, specifically methylates the guanine in position 2445 (m2G2445) and the guanine in position 2069 (m7G2069) of 23S rRNA. The chain is Ribosomal RNA large subunit methyltransferase K/L from Shewanella woodyi (strain ATCC 51908 / MS32).